Reading from the N-terminus, the 69-residue chain is DNA-directed RNA polymerase subunit omega (69 aa).

Belongs to the RNA polymerase subunit omega family. In terms of assembly, the RNAP catalytic core consists of 2 alpha, 1 beta, 1 beta' and 1 omega subunit. When a sigma factor is associated with the core the holoenzyme is formed, which can initiate transcription.

It catalyses the reaction RNA(n) + a ribonucleoside 5'-triphosphate = RNA(n+1) + diphosphate. Promotes RNA polymerase assembly. Latches the N- and C-terminal regions of the beta' subunit thereby facilitating its interaction with the beta and alpha subunits. The protein is DNA-directed RNA polymerase subunit omega of Geotalea uraniireducens (strain Rf4) (Geobacter uraniireducens).